The sequence spans 490 residues: Sec sixty-one protein homolog (490 aa).

The Cytoplasmic segment spans residues 1–32; that stretch reads MSGFRLIDIVKPILPILPEVELPFEKLPFDDK. The chain crosses the membrane as a helical span at residues 33–53; the sequence is IVYTIFAGLIYLFAQFPLVGL. The Lumenal portion of the chain corresponds to 54-121; that stretch reads PKATTPNVND…DRELFQSLTK (68 aa). The helical transmembrane segment at 122–142 threads the bilayer; sequence VFAIVQYVILTNIFIFAGYFG. The Cytoplasmic segment spans residues 143–146; that stretch reads DDLS. Residues 147-167 traverse the membrane as a helical segment; it reads VVQIGLINFQLVGAGIFTTLL. Over 168–174 the chain is Lumenal; it reads AEVIDKG. A helical transmembrane segment spans residues 175 to 195; sequence FGFSSGAMIINTVVIATNLVA. The Cytoplasmic segment spans residues 196–242; that stretch reads DTFGVSQIKVGEDDQTEAQGALINLIQGLRSKHKTFIGGIISAFNRD. Residues 243-263 form a helical membrane-spanning segment; it reads YLPNLTTTIIVLAIAIIVCYL. The Lumenal segment spans residues 264 to 293; that stretch reads QSVRVELPIRSTRARGTNNVYPIKLLYTGC. Residues 294–314 form a helical membrane-spanning segment; it reads LSVLFSYTILFYIHIFAFVLI. Residues 315–339 lie on the Cytoplasmic side of the membrane; sequence QLVAKNEPTHIICKIMGHYENANNL. A helical membrane pass occupies residues 340–360; that stretch reads LAVPTFPLSLLAPPTSFFKGV. A topological domain (lumenal) is located at residue Thr-361. The chain crosses the membrane as a helical span at residues 362–382; that stretch reads QQPLTFITYSAFILVTGIWFA. At 383–421 the chain is on the cytoplasmic side; sequence DKWQAISGSSARDVALEFKDQGITLMGRREQNVAKELNK. Residues 422–442 form a helical membrane-spanning segment; it reads VIPIAAVTGASVLSLITVIGE. Over 443–449 the chain is Lumenal; that stretch reads SLGLKGK. Residues 450-470 form a helical membrane-spanning segment; sequence AAGIVVGIAGGFSLLEVITIE. The Cytoplasmic segment spans residues 471 to 490; that stretch reads YQQSGGQSALNQVLGVPGAM.

It belongs to the SecY/SEC61-alpha family. As to quaternary structure, component of the heterotrimeric Ssh1 complex, which is composed of SSH1, SBH2 and SSS1.

It is found in the endoplasmic reticulum membrane. Part of the Ssh1 complex, which probably is the major component of a channel-forming translocon complex that may function exclusively in the cotranslational pathway of protein endoplasmic reticulum (ER) import. The chain is Sec sixty-one protein homolog (SSH1) from Saccharomyces cerevisiae (strain ATCC 204508 / S288c) (Baker's yeast).